The following is a 521-amino-acid chain: GMP synthase [glutamine-hydrolyzing] (521 aa).

Residues 9–203 (KILILDFGSQ…VSDICQCKKN (195 aa)) enclose the Glutamine amidotransferase type-1 domain. The Nucleophile role is filled by Cys-86. Catalysis depends on residues His-177 and Glu-179. The GMPS ATP-PPase domain maps to 204-396 (WTTDNIITKL…LGLPTHMLNC (193 aa)). 231-237 (SGGVDSS) provides a ligand contact to ATP.

In terms of assembly, homodimer.

The catalysed reaction is XMP + L-glutamine + ATP + H2O = GMP + L-glutamate + AMP + diphosphate + 2 H(+). The protein operates within purine metabolism; GMP biosynthesis; GMP from XMP (L-Gln route): step 1/1. In terms of biological role, catalyzes the synthesis of GMP from XMP. This is GMP synthase [glutamine-hydrolyzing] from Vesicomyosocius okutanii subsp. Calyptogena okutanii (strain HA).